We begin with the raw amino-acid sequence, 691 residues long: Elongation factor G (691 aa).

Positions 8–282 (ERVRNIGIAA…AVVDYLPAPI (275 aa)) constitute a tr-type G domain. Residues 17–24 (AHIDAGKT), 81–85 (DTPGH), and 135–138 (NKMD) each bind GTP.

Belongs to the TRAFAC class translation factor GTPase superfamily. Classic translation factor GTPase family. EF-G/EF-2 subfamily.

Its subcellular location is the cytoplasm. Catalyzes the GTP-dependent ribosomal translocation step during translation elongation. During this step, the ribosome changes from the pre-translocational (PRE) to the post-translocational (POST) state as the newly formed A-site-bound peptidyl-tRNA and P-site-bound deacylated tRNA move to the P and E sites, respectively. Catalyzes the coordinated movement of the two tRNA molecules, the mRNA and conformational changes in the ribosome. The polypeptide is Elongation factor G (Synechococcus sp. (strain CC9902)).